Reading from the N-terminus, the 415-residue chain is Small RNA 2'-O-methyltransferase (415 aa).

S99 and D117 together coordinate S-adenosyl-L-methionine. The Mg(2+) site is built by E169, E172, and H173.

It belongs to the methyltransferase superfamily. HEN1 family. Mg(2+) serves as cofactor.

Its subcellular location is the cytoplasm. The catalysed reaction is small RNA 3'-end nucleotide + S-adenosyl-L-methionine = small RNA 3'-end 2'-O-methylnucleotide + S-adenosyl-L-homocysteine + H(+). Its function is as follows. Methyltransferase that adds a 2'-O-methyl group at the 3'-end of piRNAs, a class of 24 to 30 nucleotide RNAs that are generated by a Dicer-independent mechanism and are primarily derived from transposons and other repeated sequence elements. This probably protects the 3'-end of piRNAs from uridylation activity and subsequent degradation. Stabilization of piRNAs is essential for gametogenesis. This Bombyx mori (Silk moth) protein is Small RNA 2'-O-methyltransferase.